A 350-amino-acid polypeptide reads, in one-letter code: Uroporphyrinogen decarboxylase (350 aa).

Substrate-binding positions include R27 to R31, F46, D76, Y152, S207, and H321.

Belongs to the uroporphyrinogen decarboxylase family. As to quaternary structure, homodimer.

Its subcellular location is the cytoplasm. The enzyme catalyses uroporphyrinogen III + 4 H(+) = coproporphyrinogen III + 4 CO2. The protein operates within porphyrin-containing compound metabolism; protoporphyrin-IX biosynthesis; coproporphyrinogen-III from 5-aminolevulinate: step 4/4. Its function is as follows. Catalyzes the decarboxylation of four acetate groups of uroporphyrinogen-III to yield coproporphyrinogen-III. The polypeptide is Uroporphyrinogen decarboxylase (Listeria monocytogenes serotype 4a (strain HCC23)).